The primary structure comprises 1341 residues: DNA-directed RNA polymerase subunit beta (1341 aa).

It belongs to the RNA polymerase beta chain family. As to quaternary structure, the RNAP catalytic core consists of 2 alpha, 1 beta, 1 beta' and 1 omega subunit. When a sigma factor is associated with the core the holoenzyme is formed, which can initiate transcription.

It carries out the reaction RNA(n) + a ribonucleoside 5'-triphosphate = RNA(n+1) + diphosphate. Functionally, DNA-dependent RNA polymerase catalyzes the transcription of DNA into RNA using the four ribonucleoside triphosphates as substrates. In Vibrio cholerae serotype O1 (strain ATCC 39315 / El Tor Inaba N16961), this protein is DNA-directed RNA polymerase subunit beta.